Reading from the N-terminus, the 122-residue chain is Protein NIM1-INTERACTING 2 (122 aa).

Basic and acidic residues predominate over residues 1–22 (MNNSLKKEERVEEDNGKSDGNR). The interval 1 to 28 (MNNSLKKEERVEEDNGKSDGNRGKPSTE) is disordered. Residues 39–45 (DEFFKIL) are involved in NPR1/NIM1 interaction. The Nuclear localization signal signature appears at 70-74 (KKRKR).

As to quaternary structure, interacts with NPR1 N-terminal region.

The protein localises to the nucleus. The polypeptide is Protein NIM1-INTERACTING 2 (Arabidopsis thaliana (Mouse-ear cress)).